A 294-amino-acid chain; its full sequence is Aquaporin NIP1-2 (294 aa).

Methionine 1 carries the post-translational modification N-acetylmethionine. Transmembrane regions (helical) follow at residues 54 to 74 (LMAEVLGTYFLIFAGCAAVAV) and 82 to 102 (VTLPGIAIVWGLTVMVLVYSL). An NPA 1 motif is present at residues 111-113 (NPA). 3 helical membrane passes run 133-153 (VISQVIGSTLAAATLRLLFGL), 177-197 (SFVIEFIITFYLMFVISGVAT), and 201-221 (AIGELAGLAVGSTVLLNVIIA). An NPA 2 motif is present at residues 230 to 232 (NPG). A helical transmembrane segment spans residues 248–268 (WIYIVSPIVGAVSGAWVYNMV). Serine 283 carries the phosphoserine modification.

Belongs to the MIP/aquaporin (TC 1.A.8) family. NIP (TC 1.A.8.12) subfamily. In terms of tissue distribution, expressed in developing seeds.

Its subcellular location is the membrane. Water channel probably required to promote glycerol permeability and water transport across cell membranes. The protein is Aquaporin NIP1-2 (NIP1-2) of Arabidopsis thaliana (Mouse-ear cress).